The chain runs to 392 residues: Succinyl-diaminopimelate desuccinylase (392 aa).

His76 contacts Zn(2+). Residue Asp78 is part of the active site. Zn(2+) is bound at residue Asp107. Glu143 acts as the Proton acceptor in catalysis. Zn(2+) is bound by residues Glu144, Glu172, and His357.

Belongs to the peptidase M20A family. DapE subfamily. Homodimer. Zn(2+) is required as a cofactor. Co(2+) serves as cofactor.

It carries out the reaction N-succinyl-(2S,6S)-2,6-diaminopimelate + H2O = (2S,6S)-2,6-diaminopimelate + succinate. It participates in amino-acid biosynthesis; L-lysine biosynthesis via DAP pathway; LL-2,6-diaminopimelate from (S)-tetrahydrodipicolinate (succinylase route): step 3/3. Catalyzes the hydrolysis of N-succinyl-L,L-diaminopimelic acid (SDAP), forming succinate and LL-2,6-diaminopimelate (DAP), an intermediate involved in the bacterial biosynthesis of lysine and meso-diaminopimelic acid, an essential component of bacterial cell walls. This Helicobacter hepaticus (strain ATCC 51449 / 3B1) protein is Succinyl-diaminopimelate desuccinylase.